The following is a 71-amino-acid chain: Cell division protein ZapB (71 aa).

The stretch at 5–67 (LEVLEQLESK…RALLGKMEQM (63 aa)) forms a coiled coil.

This sequence belongs to the ZapB family. Homodimer. The ends of the coiled-coil dimer bind to each other, forming polymers. Interacts with FtsZ.

It is found in the cytoplasm. Non-essential, abundant cell division factor that is required for proper Z-ring formation. It is recruited early to the divisome by direct interaction with FtsZ, stimulating Z-ring assembly and thereby promoting cell division earlier in the cell cycle. Its recruitment to the Z-ring requires functional FtsA or ZipA. The protein is Cell division protein ZapB of Aeromonas salmonicida (strain A449).